The chain runs to 205 residues: MLSKCRFVAGVQDKHSLPDFQVPEVAFAGRSNVGKSSLINAVTKNKKGARVSSNPGSTRQINFYLNEGALALVDLPGYGYSKASKESASSYMSLVEHYLLTREALHRLVLLIDSKVGLKEVDMDFISWLEERCIHYSLVLTKIDRLACTEFNDVLSAVQSRVKGCCMLLHPIIGTSSKSGKGIKELVHEVSKCVKEWPGGRDVRA.

The EngB-type G domain occupies 21-196 (QVPEVAFAGR…VHEVSKCVKE (176 aa)). Residues 29–36 (GRSNVGKS), 56–60 (GSTRQ), 74–77 (DLPG), 141–144 (TKID), and 172–177 (IIGTSS) each bind GTP. Mg(2+)-binding residues include Ser-36 and Thr-58.

This sequence belongs to the TRAFAC class TrmE-Era-EngA-EngB-Septin-like GTPase superfamily. EngB GTPase family. Mg(2+) serves as cofactor.

In terms of biological role, necessary for normal cell division and for the maintenance of normal septation. This is Probable GTP-binding protein EngB from Anaplasma marginale (strain Florida).